The primary structure comprises 129 residues: Phenazine antibiotic resistance protein EhpR (129 aa).

Residues 10-128 (TPNLQLVYVS…DGHIIRVCPL (119 aa)) form the VOC domain. D-alanylgriseoluteate contacts are provided by residues 42–43 (RY) and Trp-57.

Homodimer.

Required for resistance to the phenazine antibiotic D-alanylgriseoluteic acid (AGA), an antibiotic produced by E.agglomerans itself, and thus protects the bacterium against phenazine toxicity. Probably binds AGA and acts as a chaperone that works in tandem with a membrane transporter for subsequent antibiotic secretion. This Enterobacter agglomerans (Erwinia herbicola) protein is Phenazine antibiotic resistance protein EhpR.